We begin with the raw amino-acid sequence, 396 residues long: NADH-quinone oxidoreductase subunit D (396 aa).

It belongs to the complex I 49 kDa subunit family. NDH-1 is composed of 14 different subunits. Subunits NuoB, C, D, E, F, and G constitute the peripheral sector of the complex.

The protein localises to the cell inner membrane. It carries out the reaction a quinone + NADH + 5 H(+)(in) = a quinol + NAD(+) + 4 H(+)(out). In terms of biological role, NDH-1 shuttles electrons from NADH, via FMN and iron-sulfur (Fe-S) centers, to quinones in the respiratory chain. The immediate electron acceptor for the enzyme in this species is believed to be ubiquinone. Couples the redox reaction to proton translocation (for every two electrons transferred, four hydrogen ions are translocated across the cytoplasmic membrane), and thus conserves the redox energy in a proton gradient. This is NADH-quinone oxidoreductase subunit D from Methylorubrum populi (strain ATCC BAA-705 / NCIMB 13946 / BJ001) (Methylobacterium populi).